The following is a 570-amino-acid chain: Double-stranded RNA-binding protein Staufen homolog 2 (570 aa).

The 68-residue stretch at 8 to 75 (TPVCLVNELA…ANKALTESTL (68 aa)) folds into the DRBM 1 domain. 2 disordered regions span residues 71–94 (TESTLPKPVQKPPKSNVNNNPGSI) and 178–203 (ALQNEPIPEKSPQNGESGKEMDDDKD). The segment covering 83–94 (PKSNVNNNPGSI) has biased composition (polar residues). The DRBM 2 domain occupies 95–181 (TPTVELNGLA…AMKALQALQN (87 aa)). S188 is subject to Phosphoserine. Positions 194 to 203 (SGKEMDDDKD) are enriched in basic and acidic residues. DRBM domains follow at residues 207-274 (SEIS…ELKK) and 307-375 (NPIS…QLGY). 2 short sequence motifs (nuclear localization signal) span residues 273–291 (KKLPPLPVVEKPKLFFKKR) and 373–412 (LGYKASTSLQDPLDKTGENKGWSGPKPGFPEPTNNTPKGI). Residues 381–413 (LQDPLDKTGENKGWSGPKPGFPEPTNNTPKGIL) form a disordered region. A required for dendritic transport region spans residues 381-570 (LQDPLDKTGE…QDCKKSKSAI (190 aa)). S395 bears the Phosphoserine mark. T405 bears the Phosphothreonine mark. A phosphoserine mark is found at S416, S426, S440, S455, and S492. The disordered stretch occupies residues 545 to 570 (LREKADNNQAKPASISQDCKKSKSAI). Residues 551-561 (NNQAKPASISQ) are compositionally biased toward polar residues.

Interacts with microtubules. Isoform 2 and isoform 3 may also interact with ribosomes, and this association is independent of translation. Identified in a mRNP complex, at least composed of DHX9, DDX3X, ELAVL1, HNRNPU, IGF2BP1, ILF3, PABPC1, PCBP2, PTBP2, STAU1, STAU2, SYNCRIP and YBX1. Interacts with the exportin XPO5. This requires RNA and RAN bound to GTP. Interacts with TRIM71 (via NHL repeats) in an RNA-dependent manner. In terms of tissue distribution, expressed in brain and neurons, where isoform 2 and isoform 3 appear to be the most abundant. Expressed at the neuromuscular junction of the extensor digitorum longus, tibialis anterior and soleus muscles. Expression at neuromuscular junctions is most pronounced in slow-twitch muscle. Also weakly expressed in heart, kidney, ovary and testis.

Its subcellular location is the cytoplasm. It localises to the nucleus. The protein localises to the nucleolus. It is found in the endoplasmic reticulum. In terms of biological role, RNA-binding protein required for the microtubule-dependent transport of neuronal RNA from the cell body to the dendrite. As protein synthesis occurs within the dendrite, the localization of specific mRNAs to dendrites may be a prerequisite for neurite outgrowth and plasticity at sites distant from the cell body. This is Double-stranded RNA-binding protein Staufen homolog 2 (Stau2) from Mus musculus (Mouse).